Here is a 556-residue protein sequence, read N- to C-terminus: Membrane protein insertase YidC (556 aa).

The helical transmembrane segment at Ile7–Tyr27 threads the bilayer. Disordered stretches follow at residues Glu35–Asn59 and Ser126–Ser152. Residues Thr36–Thr54 show a composition bias toward low complexity. A run of 4 helical transmembrane segments spans residues Leu365–Phe385, Leu435–Leu455, Phe468–Val488, and Pro513–Val533.

The protein belongs to the OXA1/ALB3/YidC family. Type 1 subfamily. Interacts with the Sec translocase complex via SecD. Specifically interacts with transmembrane segments of nascent integral membrane proteins during membrane integration.

It localises to the cell inner membrane. Required for the insertion and/or proper folding and/or complex formation of integral membrane proteins into the membrane. Involved in integration of membrane proteins that insert both dependently and independently of the Sec translocase complex, as well as at least some lipoproteins. Aids folding of multispanning membrane proteins. This chain is Membrane protein insertase YidC, found in Stutzerimonas stutzeri (strain A1501) (Pseudomonas stutzeri).